The following is a 1108-amino-acid chain: Lon protease homolog, mitochondrial (1108 aa).

A mitochondrion-targeting transit peptide spans 1–62 (MLRGQSLPWR…RAFSTSSIRR (62 aa)). Disordered stretches follow at residues 24–192 (PLLP…QKPS) and 299–318 (LPPGEQSKAGNTEDKAPEKK). Positions 36–53 (RSNLSISRLSRSPSLSPR) are enriched in low complexity. Basic and acidic residues-rich tracts occupy residues 78–103 (EQKDPNEQKDSDRSPEGRRRSPDSTG) and 119–146 (KVAGEKEQRGVEEDAKKENVSIEGKSDP). Residues 161-171 (SDTKSSASNGG) show a composition bias toward polar residues. 2 stretches are compositionally biased toward basic and acidic residues: residues 174–188 (DGGRKGKKGSGDRAL) and 309–318 (NTEDKAPEKK). The Lon N-terminal domain maps to 200 to 452 (VMAIPIAKRP…KALVVLKKEL (253 aa)). 605-612 (GPPGVGKT) lines the ATP pocket. Over residues 821–855 (DKALTDEGKAAQEESKKETEEGDPKDPPADPEKST) the composition is skewed to basic and acidic residues. Residues 821-862 (DKALTDEGKAAQEESKKETEEGDPKDPPADPEKSTTETPRLA) are disordered. One can recognise a Lon proteolytic domain in the interval 895-1081 (TFPPGVTMGL…SEVFNILFAE (187 aa)). Residues serine 987 and lysine 1030 contribute to the active site.

It belongs to the peptidase S16 family. As to quaternary structure, homohexamer or homoheptamer. Organized in a ring with a central cavity.

The protein resides in the mitochondrion matrix. The catalysed reaction is Hydrolysis of proteins in presence of ATP.. In terms of biological role, ATP-dependent serine protease that mediates the selective degradation of misfolded, unassembled or oxidatively damaged polypeptides as well as certain short-lived regulatory proteins in the mitochondrial matrix. May also have a chaperone function in the assembly of inner membrane protein complexes. Participates in the regulation of mitochondrial gene expression and in the maintenance of the integrity of the mitochondrial genome. Binds to mitochondrial DNA in a site-specific manner. This is Lon protease homolog, mitochondrial (pim1) from Aspergillus fumigatus (strain ATCC MYA-4609 / CBS 101355 / FGSC A1100 / Af293) (Neosartorya fumigata).